The sequence spans 129 residues: uncharacterized protein (129 aa).

The segment covering Gln-84–Arg-98 has biased composition (basic residues). The segment at Gln-84 to Asp-129 is disordered. Positions Tyr-99–Ser-115 are enriched in basic and acidic residues.

This is an uncharacterized protein from Acanthamoeba polyphaga mimivirus (APMV).